Here is a 211-residue protein sequence, read N- to C-terminus: FMN-dependent NADH:quinone oxidoreductase (211 aa).

Residues 17–19 (SNS), 102–105 (MWNL), and 146–149 (SRGG) each bind FMN.

The protein belongs to the azoreductase type 1 family. Homodimer. FMN is required as a cofactor.

It carries out the reaction 2 a quinone + NADH + H(+) = 2 a 1,4-benzosemiquinone + NAD(+). The enzyme catalyses N,N-dimethyl-1,4-phenylenediamine + anthranilate + 2 NAD(+) = 2-(4-dimethylaminophenyl)diazenylbenzoate + 2 NADH + 2 H(+). In terms of biological role, quinone reductase that provides resistance to thiol-specific stress caused by electrophilic quinones. Also exhibits azoreductase activity. Catalyzes the reductive cleavage of the azo bond in aromatic azo compounds to the corresponding amines. The sequence is that of FMN-dependent NADH:quinone oxidoreductase from Macrococcus caseolyticus (strain JCSC5402) (Macrococcoides caseolyticum).